A 264-amino-acid chain; its full sequence is 5'-nucleotidase SurE (264 aa).

4 residues coordinate a divalent metal cation: Asp-10, Asp-11, Ser-43, and Asn-97.

This sequence belongs to the SurE nucleotidase family. Requires a divalent metal cation as cofactor.

The protein localises to the cytoplasm. It carries out the reaction a ribonucleoside 5'-phosphate + H2O = a ribonucleoside + phosphate. Nucleotidase that shows phosphatase activity on nucleoside 5'-monophosphates. The chain is 5'-nucleotidase SurE from Sulfurimonas denitrificans (strain ATCC 33889 / DSM 1251) (Thiomicrospira denitrificans (strain ATCC 33889 / DSM 1251)).